The primary structure comprises 408 residues: uncharacterized protein (408 aa).

3 residues coordinate a divalent metal cation: Glu-35, Asp-61, and Asn-96.

The protein belongs to the metallophosphoesterase superfamily. The cofactor is a divalent metal cation.

This is an uncharacterized protein from Bacillus subtilis (strain 168).